The chain runs to 178 residues: MKLVVINGTPRKFGRTRVVAKYIADQFEGELYDLAIEELPLYNGEESQRDLEAVKKLKTLVKAADGVVLCTPEYHNAMSGALKNSLDYLSSSEFIHKPVALLAVAGGGKGGINALNSMHASLAGVYANAIPKQVVLDGLHVQDGELGEDAKPLIHDVVKELKAYMSVYKEVKKQLGVE.

Glycine 106–glycine 111 provides a ligand contact to NADP(+).

This sequence belongs to the azoreductase type 2 family. Monomer.

The catalysed reaction is N,N-dimethyl-1,4-phenylenediamine + aniline + 2 NADP(+) = 4-(dimethylamino)azobenzene + 2 NADPH + 2 H(+). Catalyzes the reductive cleavage of azo bond in aromatic azo compounds to the corresponding amines. Requires NADPH as an electron donor for its activity. Compounds with paired naphthalene groups coupled with the azo group are good substrates, with the following preference order: Rocceline &gt; Sumifix Black B &gt; Solar Orange. The protein is NADPH azoreductase (azr) of Bacillus sp. (strain OY1-2).